The chain runs to 122 residues: Large ribosomal subunit protein uL18 (122 aa).

Over residues 1-19 (MSKLSRKQQTQKRHKRLRR) the composition is skewed to basic residues. The interval 1 to 27 (MSKLSRKQQTQKRHKRLRRNLSGTESR) is disordered.

The protein belongs to the universal ribosomal protein uL18 family. As to quaternary structure, part of the 50S ribosomal subunit; part of the 5S rRNA/L5/L18/L25 subcomplex. Contacts the 5S and 23S rRNAs.

This is one of the proteins that bind and probably mediate the attachment of the 5S RNA into the large ribosomal subunit, where it forms part of the central protuberance. The chain is Large ribosomal subunit protein uL18 from Prochlorococcus marinus (strain NATL1A).